The primary structure comprises 408 residues: D-inositol 3-phosphate glycosyltransferase (408 aa).

His-7 is a binding site for 1D-myo-inositol 3-phosphate. Residues 13–14 (QP) and Gly-21 contribute to the UDP-N-acetyl-alpha-D-glucosamine site. Residues 18–23 (DAGGMN), Lys-76, Tyr-109, Thr-133, and Arg-153 each bind 1D-myo-inositol 3-phosphate. Residues Arg-227, Lys-232, and Val-288 each coordinate UDP-N-acetyl-alpha-D-glucosamine. 3 residues coordinate Mg(2+): Phe-297, Arg-298, and Ala-300. Positions 310 and 318 each coordinate UDP-N-acetyl-alpha-D-glucosamine. Residue Thr-324 participates in Mg(2+) binding.

The protein belongs to the glycosyltransferase group 1 family. MshA subfamily. In terms of assembly, homodimer.

It catalyses the reaction 1D-myo-inositol 3-phosphate + UDP-N-acetyl-alpha-D-glucosamine = 1D-myo-inositol 2-acetamido-2-deoxy-alpha-D-glucopyranoside 3-phosphate + UDP + H(+). Its function is as follows. Catalyzes the transfer of a N-acetyl-glucosamine moiety to 1D-myo-inositol 3-phosphate to produce 1D-myo-inositol 2-acetamido-2-deoxy-glucopyranoside 3-phosphate in the mycothiol biosynthesis pathway. This Paenarthrobacter aurescens (strain TC1) protein is D-inositol 3-phosphate glycosyltransferase.